The chain runs to 193 residues: MAQAGLLIWLFFTILLLDLTCTQSAKLKTQKDHRSKEKDGDLKTQIDKLWREINSLKEMQALQTVCLRGTKIHKKCYLSFEETKHFHEANEDCIAKGGTLAIPRDSEENNALRDYGKKSLHGSGEFWLGINDMVNEGKFVDVNGVAITYFNWERIPKGGKRKNCALLNQASQGKWVDEVCRSLKKYICEFIIP.

Residues 1–24 (MAQAGLLIWLFFTILLLDLTCTQS) form the signal peptide. 3 disulfides stabilise this stretch: C66/C76, C93/C188, and C164/C180. A C-type lectin domain is found at 72–189 (IHKKCYLSFE…CRSLKKYICE (118 aa)).

It localises to the secreted. The protein is C-type lectin domain family 3 member A homolog (clec3a) of Xenopus laevis (African clawed frog).